The sequence spans 248 residues: Gamma-interferon-inducible lysosomal thiol reductase (248 aa).

An N-terminal signal peptide occupies residues 1–26 (MSWSPILPFLSLLLLLFPLEVPRAAT). Residues 27–54 (ASLSQASSEGTTTCKAHDVCLLGPRPLP) constitute a propeptide, removed in mature form. The cysteines at positions 69 and 72 are disulfide-linked. N-linked (GlcNAc...) asparagine glycans are attached at residues Asn92 and Asn105. A propeptide spans 231 to 248 (KPDICSSIADSPRKVCYK) (removed in mature form).

It belongs to the GILT family. As to quaternary structure, dimer; disulfide-linked. In terms of processing, N-glycosylated. Sugar chains contain mannose-6-phosphate. Synthesized as a 35 kDa precursor which is then processed into the mature 30 kDa form via cleavage of N-terminal and C-terminal propeptides. Processing of the precursor is mediated by multiple lysosomal proteases.

It is found in the secreted. The protein resides in the lysosome. In terms of biological role, lysosomal thiol reductase that can reduce protein disulfide bonds. May facilitate the complete unfolding of proteins destined for lysosomal degradation. Plays an important role in antigen processing. Facilitates the generation of MHC class II-restricted epitodes from disulfide bond-containing antigen by the endocytic reduction of disulfide bonds. Also facilitates MHC class I-restricted recognition of exogenous antigens containing disulfide bonds by CD8+ T-cells or crosspresentation. The protein is Gamma-interferon-inducible lysosomal thiol reductase (Ifi30) of Mus musculus (Mouse).